Reading from the N-terminus, the 644-residue chain is Threonine--tRNA ligase (644 aa).

One can recognise a TGS domain in the interval 1–61; it reads MPVITLPDGS…EKDTKLTIIT (61 aa). The interval 242-535 is catalytic; sequence DHRRIGADLD…LIEHYEGKFP (294 aa). Positions 335, 386, and 512 each coordinate Zn(2+).

Belongs to the class-II aminoacyl-tRNA synthetase family. As to quaternary structure, homodimer. Requires Zn(2+) as cofactor.

It is found in the cytoplasm. It catalyses the reaction tRNA(Thr) + L-threonine + ATP = L-threonyl-tRNA(Thr) + AMP + diphosphate + H(+). Catalyzes the attachment of threonine to tRNA(Thr) in a two-step reaction: L-threonine is first activated by ATP to form Thr-AMP and then transferred to the acceptor end of tRNA(Thr). Also edits incorrectly charged L-seryl-tRNA(Thr). The chain is Threonine--tRNA ligase from Nitrosococcus oceani (strain ATCC 19707 / BCRC 17464 / JCM 30415 / NCIMB 11848 / C-107).